The sequence spans 178 residues: Small ribosomal subunit protein uS5 (178 aa).

The 64-residue stretch at 15-78 folds into the S5 DRBM domain; that stretch reads FEEKIIEIRR…SAAKRNIVEV (64 aa).

It belongs to the universal ribosomal protein uS5 family. As to quaternary structure, part of the 30S ribosomal subunit. Contacts proteins S4 and S8.

In terms of biological role, with S4 and S12 plays an important role in translational accuracy. Functionally, located at the back of the 30S subunit body where it stabilizes the conformation of the head with respect to the body. This Thermotoga maritima (strain ATCC 43589 / DSM 3109 / JCM 10099 / NBRC 100826 / MSB8) protein is Small ribosomal subunit protein uS5.